The sequence spans 261 residues: MPRKSVLDFAKGRGAYVWITAYDYPTAKAVDEAGVDGILVGDSLGMVLLGLPNTLGVTMEDMVRHTEAVARARPRALVVADMPFMSYETGPEDALRNAARLVKAGADAVKLEGGTEYAPIVERLVKAGIPVMGHIGLTPQRFLTIGGFKMVGKTEEQRRKILEDAKALRDAGVFSIVLEFVPASLAREVTQAVDVPTICIGSGPHCDGQILVLHDVVGLTERPPSFAKKYADVAAAIREAVSKYAEEVRKGLFPAREHYRE.

The Mg(2+) site is built by D42 and D81. 3-methyl-2-oxobutanoate is bound by residues 42–43 (DS), D81, and K110. Residue E112 participates in Mg(2+) binding. The Proton acceptor role is filled by E179.

It belongs to the PanB family. In terms of assembly, homodecamer; pentamer of dimers. Requires Mg(2+) as cofactor.

The protein resides in the cytoplasm. It carries out the reaction 3-methyl-2-oxobutanoate + (6R)-5,10-methylene-5,6,7,8-tetrahydrofolate + H2O = 2-dehydropantoate + (6S)-5,6,7,8-tetrahydrofolate. The protein operates within cofactor biosynthesis; coenzyme A biosynthesis. Functionally, catalyzes the reversible reaction in which hydroxymethyl group from 5,10-methylenetetrahydrofolate is transferred onto alpha-ketoisovalerate to form ketopantoate. The polypeptide is 3-methyl-2-oxobutanoate hydroxymethyltransferase (Pyrobaculum neutrophilum (strain DSM 2338 / JCM 9278 / NBRC 100436 / V24Sta) (Thermoproteus neutrophilus)).